The chain runs to 53 residues: ATP synthase protein 8 (53 aa).

Residues 4 to 24 form a helical membrane-spanning segment; the sequence is MAPISWLLLFIVFSITFILFC.

It belongs to the ATPase protein 8 family. In terms of assembly, F-type ATPases have 2 components, CF(1) - the catalytic core - and CF(0) - the membrane proton channel.

Its subcellular location is the mitochondrion membrane. Its function is as follows. Mitochondrial membrane ATP synthase (F(1)F(0) ATP synthase or Complex V) produces ATP from ADP in the presence of a proton gradient across the membrane which is generated by electron transport complexes of the respiratory chain. F-type ATPases consist of two structural domains, F(1) - containing the extramembraneous catalytic core and F(0) - containing the membrane proton channel, linked together by a central stalk and a peripheral stalk. During catalysis, ATP synthesis in the catalytic domain of F(1) is coupled via a rotary mechanism of the central stalk subunits to proton translocation. Part of the complex F(0) domain. Minor subunit located with subunit a in the membrane. In Drosophila yakuba (Fruit fly), this protein is ATP synthase protein 8 (mt:ATPase8).